Here is a 613-residue protein sequence, read N- to C-terminus: Secretogranin-2 (613 aa).

The first 27 residues, 1–27, serve as a signal peptide directing secretion; sequence MAEAKTHWLGAVLSLIPLIFLLSEAEA. Positions 28–30 are excised as a propeptide; the sequence is ASF. 2 disordered regions span residues 67-105 and 119-146; these read QQAH…DSLS and QAEN…PMDM. A compositionally biased stretch (basic and acidic residues) spans 92–105; sequence ENGDLPESSRDSLS. Tyrosine 150 is subject to Sulfotyrosine. 6 positions are modified to phosphoserine: serine 173, serine 267, serine 428, serine 528, serine 551, and serine 552. Over residues 257-283 the composition is skewed to basic and acidic residues; sequence ESQTQEEVRDSKENADKTEQINDEMKR. The segment at 257–287 is disordered; the sequence is ESQTQEEVRDSKENADKTEQINDEMKRSGQL. Positions 546–557 are enriched in basic and acidic residues; the sequence is HLSQHSSQETDK. The segment at 546–580 is disordered; it reads HLSQHSSQETDKLASVSKRLPVGTPKSDDTPNRPY.

It belongs to the chromogranin/secretogranin protein family. As to quaternary structure, interacts with Secretogranin III/SCG3. In terms of tissue distribution, highest levels detected in anterior pituitary followed by adrenal medulla and posterior pituitary (at protein level). In the brain, high levels are found in the hypothalamus, comparable to those present in posterior pituitary with two- to six-fold lower levels present in the other brain regions investigated including caudate nucleus, hippocampus, thalamus and brainstem (at protein level).

The protein localises to the secreted. Neuroendocrine protein of the granin family that regulates the biogenesis of secretory granules. This is Secretogranin-2 (SCG2) from Bos taurus (Bovine).